A 471-amino-acid polypeptide reads, in one-letter code: Argininosuccinate lyase (471 aa).

Belongs to the lyase 1 family. Argininosuccinate lyase subfamily.

The protein resides in the cytoplasm. The catalysed reaction is 2-(N(omega)-L-arginino)succinate = fumarate + L-arginine. Its pathway is amino-acid biosynthesis; L-arginine biosynthesis; L-arginine from L-ornithine and carbamoyl phosphate: step 3/3. This Renibacterium salmoninarum (strain ATCC 33209 / DSM 20767 / JCM 11484 / NBRC 15589 / NCIMB 2235) protein is Argininosuccinate lyase.